The chain runs to 88 residues: FAD assembly factor SdhE (88 aa).

The protein belongs to the SdhE FAD assembly factor family. Monomer. Makes weak or transient interactions with SdhA. Interacts with YgfX. Interacts with FrdA.

The protein resides in the cytoplasm. The protein operates within antibiotic biosynthesis; prodigiosin biosynthesis. In terms of biological role, an FAD assembly protein, which accelerates covalent attachment of the cofactor into other proteins. Plays an essential role in the assembly of succinate dehydrogenase (SDH, respiratory complex II), an enzyme complex that is a component of both the tricarboxylic acid cycle and the electron transport chain, and which couples the oxidation of succinate to fumarate with the reduction of ubiquinone (coenzyme Q) to ubiquinol. Required for flavinylation (covalent attachment of FAD) of the flavoprotein subunit SdhA of SDH. Required for flavinylation of the flavoprotein subunit FrdA of fumarate reductase (FRD). Flavinylation of SDH and FRD occurs in a similar but not identical manner, as site-specific mutations display subtle differences between them. Flavinylates SdhA in vivo in the absence of the other SDH subunits; SdhE mutants that do not flavinylate also interfere with wild-type activity in a possible dominant-negative fashion. Weakly binds to FAD and facilitates its binding to SdhA. Required for production of prodigiosin antibiotic (Pig); overproduction of SdhE in a deletion mutant leads to decreased synthesis of Pig compared to wild-type. Capable of flavinylating A.pasteurianus SdhA when the SDH operon and this gene are expressed in G.oxydans; flavinylation of SdhA is detected only in the presence of sdhE. The polypeptide is FAD assembly factor SdhE (Serratia sp. (strain ATCC 39006) (Prodigiosinella confusarubida)).